The primary structure comprises 658 residues: Biosynthetic arginine decarboxylase (658 aa).

Lys127 carries the N6-(pyridoxal phosphate)lysine modification. Residue 307 to 317 (FDVGGGLGVDY) participates in substrate binding.

The protein belongs to the Orn/Lys/Arg decarboxylase class-II family. SpeA subfamily. Mg(2+) is required as a cofactor. Requires pyridoxal 5'-phosphate as cofactor.

It carries out the reaction L-arginine + H(+) = agmatine + CO2. It participates in amine and polyamine biosynthesis; agmatine biosynthesis; agmatine from L-arginine: step 1/1. Its function is as follows. Catalyzes the biosynthesis of agmatine from arginine. The protein is Biosynthetic arginine decarboxylase of Salmonella typhi.